Reading from the N-terminus, the 513-residue chain is ATP synthase subunit alpha (513 aa).

Residue 169–176 coordinates ATP; the sequence is GDRQTGKT.

This sequence belongs to the ATPase alpha/beta chains family. In terms of assembly, F-type ATPases have 2 components, CF(1) - the catalytic core - and CF(0) - the membrane proton channel. CF(1) has five subunits: alpha(3), beta(3), gamma(1), delta(1), epsilon(1). CF(0) has three main subunits: a(1), b(2) and c(9-12). The alpha and beta chains form an alternating ring which encloses part of the gamma chain. CF(1) is attached to CF(0) by a central stalk formed by the gamma and epsilon chains, while a peripheral stalk is formed by the delta and b chains.

Its subcellular location is the cell inner membrane. It carries out the reaction ATP + H2O + 4 H(+)(in) = ADP + phosphate + 5 H(+)(out). Produces ATP from ADP in the presence of a proton gradient across the membrane. The alpha chain is a regulatory subunit. This chain is ATP synthase subunit alpha, found in Shewanella denitrificans (strain OS217 / ATCC BAA-1090 / DSM 15013).